The primary structure comprises 559 residues: Potassium-transporting ATPase potassium-binding subunit (559 aa).

13 helical membrane passes run 5–25, 27–47, 63–83, 132–152, 170–190, 253–273, 283–303, 327–347, 356–376, 379–399, 416–436, 484–504, and 524–544; these read GFLLIASFLLILLVLAKPLGS, LARLIAAVPLPGVAGIERILW, LLALLTLNLLGLGILFCLLFW, GLTVQNFLSAATGIAVVFALI, LVRITLWILFPVALIIALFFI, LAQMLAIFLIPAALCFAFGEA, LLWAMSFIFVVCVAVVMWAEV, FGVLASSLFAVVTTAASCGAV, ALGGMVPMWLMQIGEVVFGGV, GLYGMLLFVLLAVFIAGLMIG, MTALAILVTPMLVLLGSALAM, LLAFCMFVGRFGVIIPVMAIA, and GALFIGLLIGTVLLVGALTFI.

Belongs to the KdpA family. As to quaternary structure, the system is composed of three essential subunits: KdpA, KdpB and KdpC.

It is found in the cell inner membrane. Part of the high-affinity ATP-driven potassium transport (or Kdp) system, which catalyzes the hydrolysis of ATP coupled with the electrogenic transport of potassium into the cytoplasm. This subunit binds the periplasmic potassium ions and delivers the ions to the membrane domain of KdpB through an intramembrane tunnel. The polypeptide is Potassium-transporting ATPase potassium-binding subunit (Salmonella typhimurium (strain LT2 / SGSC1412 / ATCC 700720)).